An 87-amino-acid polypeptide reads, in one-letter code: Large ribosomal subunit protein bL27 (87 aa).

A disordered region spans residues M1 to Y20.

The protein belongs to the bacterial ribosomal protein bL27 family.

The protein is Large ribosomal subunit protein bL27 (rpmA) of Treponema pallidum (strain Nichols).